Consider the following 201-residue polypeptide: GTP cyclohydrolase 1 (201 aa).

Positions 90, 93, and 163 each coordinate Zn(2+).

The protein belongs to the GTP cyclohydrolase I family. As to quaternary structure, homomer.

It carries out the reaction GTP + H2O = 7,8-dihydroneopterin 3'-triphosphate + formate + H(+). Its pathway is cofactor biosynthesis; 7,8-dihydroneopterin triphosphate biosynthesis; 7,8-dihydroneopterin triphosphate from GTP: step 1/1. This Streptomyces griseus subsp. griseus (strain JCM 4626 / CBS 651.72 / NBRC 13350 / KCC S-0626 / ISP 5235) protein is GTP cyclohydrolase 1.